A 440-amino-acid polypeptide reads, in one-letter code: C4-dicarboxylate transport protein (440 aa).

Helical transmembrane passes span Leu-8 to Ala-28, Phe-40 to Ile-60, Leu-74 to Val-94, Gly-147 to Lys-167, Ile-187 to Val-207, Leu-221 to Leu-241, Val-288 to Leu-308, and Ala-354 to Val-374. Residues Asp-419–Gly-440 are disordered.

It belongs to the dicarboxylate/amino acid:cation symporter (DAACS) (TC 2.A.23) family.

The protein localises to the cell inner membrane. Functionally, responsible for the transport of dicarboxylates such as succinate, fumarate, and malate from the periplasm across the membrane. The protein is C4-dicarboxylate transport protein of Anaeromyxobacter dehalogenans (strain 2CP-C).